A 276-amino-acid polypeptide reads, in one-letter code: Halorhodopsin (276 aa).

Positions 1-21 (MTAASTTATTMLQATQSDVLQ) are excised as a propeptide. Residues 22 to 25 (EIQS) lie on the Extracellular side of the membrane. A helical membrane pass occupies residues 26 to 51 (NFLLNSSIWVNIALAGVVILLFVAMG). At 52-57 (RDIESP) the chain is on the cytoplasmic side. A helical membrane pass occupies residues 58–81 (RAKLIWVATMLVPLVSISSYAGLA). Topologically, residues 82 to 105 (SGLTVGFLQMPPGHALAGQEVLSP) are extracellular. The helical transmembrane segment at 106 to 127 (WGRYLTWTFSTPMILLALGLLA) threads the bilayer. Residues 128 to 130 (DTD) lie on the Cytoplasmic side of the membrane. The chain crosses the membrane as a helical span at residues 131 to 154 (IASLFTAITMDIGMCVTGLAAALI). Residues 155 to 157 (TSS) lie on the Extracellular side of the membrane. The helical transmembrane segment at 158–180 (HLLRWVFYGISCAFFVAVLYVLL) threads the bilayer. Over 181–192 (VQWPADAEAAGT) the chain is Cytoplasmic. Residues 193–216 (SEIFGTLKILTVVLWLGYPILWAL) form a helical membrane-spanning segment. Over 217–225 (GSEGVALLS) the chain is Extracellular. Residues 226–254 (VGVTSWGYSGLDILAKYVFAFLLLRWVAA) traverse the membrane as a helical segment. Lys-241 carries the N6-(retinylidene)lysine modification. The Cytoplasmic segment spans residues 255-276 (NEGAVSGSGMSIGSGGAAPADD).

It belongs to the archaeal/bacterial/fungal opsin family.

The protein resides in the cell membrane. In terms of biological role, light-driven chloride pump. The polypeptide is Halorhodopsin (hop) (Halobacterium halobium (strain port)).